The following is a 307-amino-acid chain: Retron Ec86 putative ribosyltransferase/DNA-binding protein (307 aa).

Functionally, possible ribosyltransferase/DNA-binding component of antiviral defense system retron Ec86, composed of a non-coding RNA (ncRNA), a ribosyltransferase/DNA-binding protein and a reverse transcriptase (RT). Expression of the 3-gene retron confers protection against bacteriophages T5. At multiplicity of infection (MOI) of 0.02 cultures grow normally when infected with T5 without collapsing, at MOI 2 cultures enter growth stasis. This chain is Retron Ec86 putative ribosyltransferase/DNA-binding protein, found in Escherichia coli.